A 465-amino-acid chain; its full sequence is Sushi repeat-containing protein SRPX2 (465 aa).

An N-terminal signal peptide occupies residues 1-23; sequence MASQLTQRGALFLLFFLTPAVTP. Sushi domains lie at 69–119, 120–178, and 262–321; these read ATCY…YCRQ, MRCH…VCVD, and RRCP…ICAP. Disulfide bonds link C71–C105, C91–C117, C122–C163, and C149–C176. The HYR domain occupies 177 to 261; it reads VDIDPPKIRC…SCKFIVKVQV (85 aa). 2 disulfides stabilise this stretch: C264-C306 and C292-C319.

As to quaternary structure, forms homooligomers. Interacts with PLAUR (via the UPAR/Ly6 domains), ADAMTS4 and CTSB. Interacts with HGF; the interaction increases the mitogenic activity of HGF. In terms of processing, contains chondroitin sulfate chains. In terms of tissue distribution, expressed in neurons of the rolandic area of the brain (at protein level). Highly expressed in the brain, placenta, lung, trachea, uterus, adrenal gland, heart, ovary and placenta. Weakly expressed in the peripheral blood, brain and bone marrow. Expressed in numerous cancer cell lines and in gastrointestinal cancer cells. Higher levels found in colorectal cancers than in normal colonic mucosa.

It is found in the secreted. It localises to the cytoplasm. Its subcellular location is the cell surface. The protein localises to the synapse. In terms of biological role, acts as a ligand for the urokinase plasminogen activator surface receptor. Plays a role in angiogenesis by inducing endothelial cell migration and the formation of vascular network (cords). Involved in cellular migration and adhesion. Increases the phosphorylation levels of FAK. Interacts with and increases the mitogenic activity of HGF. Promotes synapse formation. May have a role in the perisylvian region, critical for language and cognitive development. The polypeptide is Sushi repeat-containing protein SRPX2 (SRPX2) (Homo sapiens (Human)).